The sequence spans 75 residues: Putative defensin-like protein 119 (75 aa).

A signal peptide spans 1-25 (MAKSTIFAIFMIVFVLGMVTKETKG). Intrachain disulfides connect cysteine 29–cysteine 73, cysteine 39–cysteine 58, cysteine 44–cysteine 67, and cysteine 48–cysteine 69.

Belongs to the DEFL family.

The protein localises to the secreted. The sequence is that of Putative defensin-like protein 119 (LCR53) from Arabidopsis thaliana (Mouse-ear cress).